Reading from the N-terminus, the 473-residue chain is Hyaluronidase-2 (473 aa).

The signal sequence occupies residues Met1–Ala20. 2 cysteine pairs are disulfide-bonded: Cys47–Cys343 and Cys214–Cys230. Asn77 and Asn106 each carry an N-linked (GlcNAc...) asparagine glycan. The Proton donor role is filled by Glu138. 2 N-linked (GlcNAc...) asparagine glycosylation sites follow: Asn340 and Asn360. The 79-residue stretch at Ala364 to Gln442 folds into the EGF-like domain. 3 cysteine pairs are disulfide-bonded: Cys368-Cys379, Cys373-Cys430, and Cys432-Cys441. A lipid anchor (GPI-anchor amidated glycine) is attached at Gly451. The propeptide at Ala452 to Thr473 is removed in mature form.

This sequence belongs to the glycosyl hydrolase 56 family. As to quaternary structure, interacts with MST1R.

Its subcellular location is the cell membrane. The enzyme catalyses Random hydrolysis of (1-&gt;4)-linkages between N-acetyl-beta-D-glucosamine and D-glucuronate residues in hyaluronate.. Its function is as follows. Catalyzes hyaluronan degradation into small fragments that are endocytosed and degraded in lysosomes by HYAL1 and exoglycosidases. Essential for the breakdown of extracellular matrix hyaluronan. This Bos taurus (Bovine) protein is Hyaluronidase-2 (HYAL2).